Consider the following 376-residue polypeptide: Zinc-regulated transporter 1 (376 aa).

Residues 1 to 50 (MSNVTTPWWKQWDPSEVTLADKTPDDVWKTCVLQGVYFGGNEYNGNLGAR) lie on the Extracellular side of the membrane. The chain crosses the membrane as a helical span at residues 51-71 (ISSVFVILFVSTFFTMFPLIS). Over 72–80 (TKVKRLRIP) the chain is Cytoplasmic. The helical transmembrane segment at 81 to 101 (LYVYLFAKYFGSGVIVATAFI) threads the bilayer. Topologically, residues 102-122 (HLMDPAYGAIGGTTCVGQTGN) are extracellular. A helical transmembrane segment spans residues 123-143 (WGLYSWCPAIMLTSLTFTFLT). Residues 144–216 (DLFSSVWVER…TSMDVVQSFQ (73 aa)) lie on the Cytoplasmic side of the membrane. Over residues 177–191 (VSSENDNENGTANGS) the composition is skewed to polar residues. Residues 177 to 196 (VSSENDNENGTANGSHDTKN) form a disordered region. The helical transmembrane segment at 217–237 (AQFYAFLILEFGVIFHSVMIG) threads the bilayer. The Extracellular portion of the chain corresponds to 238-242 (LNLGS). A helical membrane pass occupies residues 243–263 (VGDEFSSLYPVLVFHQSFEGL). Over 264-278 (GIGARLSAIEFPRSK) the chain is Cytoplasmic. Residues 279 to 299 (RWWPWALCVAYGLTTPICVAI) traverse the membrane as a helical segment. Residues 300-310 (GLGVRTRYVSG) are Extracellular-facing. Residues 311–331 (SYTALVISGVLDAISAGILLY) traverse the membrane as a helical segment. The Cytoplasmic portion of the chain corresponds to 332–354 (TGLVELLARDFIFNPQRTKDLRE). Residues 355 to 375 (LSFNVICTLFGAGIMALIGKW) traverse the membrane as a helical segment. Ala376 is a topological domain (extracellular).

It belongs to the ZIP transporter (TC 2.A.5) family.

The protein localises to the membrane. High-affinity zinc transport protein. The chain is Zinc-regulated transporter 1 (ZRT1) from Saccharomyces cerevisiae (strain ATCC 204508 / S288c) (Baker's yeast).